A 348-amino-acid polypeptide reads, in one-letter code: Ileal sodium/bile acid cotransporter (348 aa).

Residues 1–28 lie on the Extracellular side of the membrane; it reads MDNSSICNPNATICEGDSCIAPESNFNA. Residues N3 and N10 are each glycosylated (N-linked (GlcNAc...) asparagine). A helical membrane pass occupies residues 29–49; it reads ILSVVMSTVLTILLALVMFSM. Residues 50-81 lie on the Cytoplasmic side of the membrane; it reads GCNVELHKFLGHLRRPWGIVVGFLCQFGIMPL. Residues 82-102 form a helical membrane-spanning segment; the sequence is TGFVLSVAFGILPVQAVVVLI. Residues 103–126 lie on the Extracellular side of the membrane; it reads QGCCPGGTASNILAYWVDGDMDLS. A helical transmembrane segment spans residues 127–147; that stretch reads VSMTTCSTLLALGMMPLCLFI. Topologically, residues 148 to 157 are cytoplasmic; the sequence is YTKMWVDSGT. The helical transmembrane segment at 158–178 threads the bilayer; sequence IVIPYDSIGTSLVALVIPVSI. The Extracellular segment spans residues 179–195; that stretch reads GMYVNHKWPQKAKIILK. Residues 196 to 216 traverse the membrane as a helical segment; sequence IGSIAGAILIVLIAVVGGILY. The Cytoplasmic portion of the chain corresponds to 217–224; it reads QSAWTIEP. A helical transmembrane segment spans residues 225-245; it reads KLWIIGTIYPIAGYGLGFFLA. The Extracellular segment spans residues 246–284; the sequence is RIAGQPWYRCRTVALETGLQNTQLCSTIVQLSFSPEDLN. The chain crosses the membrane as a helical span at residues 285 to 305; sequence LVFTFPLIYSIFQIAFAAILL. Residues 306–348 are Cytoplasmic-facing; it reads GAYVAYKKCHGKNNTELQEKTDNEMEPRSSFQETNKGFQPDEK. Residues 322–332 are compositionally biased toward basic and acidic residues; the sequence is LQEKTDNEMEP. Residues 322-348 form a disordered region; sequence LQEKTDNEMEPRSSFQETNKGFQPDEK. At S335 the chain carries Phosphoserine.

It belongs to the bile acid:sodium symporter (BASS) (TC 2.A.28) family. In terms of assembly, monomer and homodimer. Mainly expressed in ileum and kidney, lower expression in jejunum.

It localises to the membrane. It carries out the reaction taurocholate(out) + 2 Na(+)(out) = taurocholate(in) + 2 Na(+)(in). It catalyses the reaction cholate(out) + 2 Na(+)(out) = cholate(in) + 2 Na(+)(in). The catalysed reaction is taurochenodeoxycholate(out) + 2 Na(+)(out) = taurochenodeoxycholate(in) + 2 Na(+)(in). The enzyme catalyses tauroursodeoxycholate(out) + 2 Na(+)(out) = tauroursodeoxycholate(in) + 2 Na(+)(in). It carries out the reaction glycocholate(out) + 2 Na(+)(out) = glycocholate(in) + 2 Na(+)(in). It catalyses the reaction tauronorcholate(out) + 2 Na(+)(out) = tauronorcholate(in) + 2 Na(+)(in). The catalysed reaction is tauroallocholate(out) + 2 Na(+)(out) = tauroallocholate(in) + 2 Na(+)(in). The enzyme catalyses taurodeoxycholate(out) + 2 Na(+)(out) = taurodeoxycholate(in) + 2 Na(+)(in). It carries out the reaction tauro-beta-muricholate(out) + 2 Na(+)(out) = tauro-beta-muricholate(in) + 2 Na(+)(in). Plays a critical role in the sodium-dependent reabsorption of bile acids from the lumen of the small intestine. Transports various bile acids, unconjugated or conjugated, such as cholate and taurocholate. Also responsible for bile acid transport in the renal proximal tubules, a salvage mechanism that helps conserve bile acids. Works collaboratively with the Na(+)-taurocholate cotransporting polypeptide (NTCP), the organic solute transporter (OST), and the bile salt export pump (BSEP), to ensure efficacious biological recycling of bile acids during enterohepatic circulation. In Cricetulus griseus (Chinese hamster), this protein is Ileal sodium/bile acid cotransporter (SLC10A2).